We begin with the raw amino-acid sequence, 200 residues long: 3-isopropylmalate dehydratase small subunit (200 aa).

This sequence belongs to the LeuD family. LeuD type 1 subfamily. As to quaternary structure, heterodimer of LeuC and LeuD.

It carries out the reaction (2R,3S)-3-isopropylmalate = (2S)-2-isopropylmalate. Its pathway is amino-acid biosynthesis; L-leucine biosynthesis; L-leucine from 3-methyl-2-oxobutanoate: step 2/4. In terms of biological role, catalyzes the isomerization between 2-isopropylmalate and 3-isopropylmalate, via the formation of 2-isopropylmaleate. This Pectobacterium carotovorum subsp. carotovorum (strain PC1) protein is 3-isopropylmalate dehydratase small subunit.